The chain runs to 136 residues: Small ribosomal subunit protein uS19 (136 aa).

The protein belongs to the universal ribosomal protein uS19 family.

Protein S19 forms a complex with S13 that binds strongly to the 16S ribosomal RNA. The sequence is that of Small ribosomal subunit protein uS19 from Methanocorpusculum labreanum (strain ATCC 43576 / DSM 4855 / Z).